Consider the following 563-residue polypeptide: Zinc finger CCHC domain-containing protein 7 (563 aa).

Disordered stretches follow at residues 41–64 (SQNL…VPGA) and 133–157 (SHST…QNSS). Positions 133–142 (SHSTPKVSAP) are enriched in polar residues. Low complexity predominate over residues 143-157 (QSNNFKSQKSCQNSS). 5 CCHC-type zinc fingers span residues 265–282 (VVCR…NCPV), 287–304 (PACC…SCPS), 305–322 (RYCL…ECIE), 328–345 (KTCH…ACPE), and 372–389 (VYCC…ECKE). The disordered stretch occupies residues 443-494 (KVDAKPPAKKRKKKHPSKKERKGTIRDYECAETKQKKKHKKRKSGLQEIEGD). Positions 449–463 (PAKKRKKKHPSKKER) are enriched in basic residues. The span at 464-476 (KGTIRDYECAETK) shows a compositional bias: basic and acidic residues. The span at 477 to 486 (QKKKHKKRKS) shows a compositional bias: basic residues.

Component of a nucleolar TRAMP-like complex, an ATP-dependent exosome regulatory complex consisting of a helicase (MTREX), an oligadenylate polymerase (PAPD5 or PAPD7), and a substrate specific RNA-binding factor (ZCCHC7 or ZCCHC8). Several TRAMP-like complexes exist with specific compositions and are associated with nuclear, or nucleolar RNA exosomes.

The protein resides in the nucleus. It localises to the nucleolus. The chain is Zinc finger CCHC domain-containing protein 7 (zcchc7) from Xenopus laevis (African clawed frog).